The sequence spans 163 residues: Endoribonuclease YbeY (163 aa).

Residues His-116, His-120, and His-126 each coordinate Zn(2+).

Belongs to the endoribonuclease YbeY family. Zn(2+) is required as a cofactor.

It localises to the cytoplasm. Its function is as follows. Single strand-specific metallo-endoribonuclease involved in late-stage 70S ribosome quality control and in maturation of the 3' terminus of the 16S rRNA. This is Endoribonuclease YbeY from Idiomarina loihiensis (strain ATCC BAA-735 / DSM 15497 / L2-TR).